A 366-amino-acid chain; its full sequence is Lipase member J (366 aa).

Serine 141 acts as the Nucleophile in catalysis. Catalysis depends on charge relay system residues aspartate 312 and histidine 341.

The protein belongs to the AB hydrolase superfamily. Lipase family.

The protein is Lipase member J (LIPJ) of Homo sapiens (Human).